Here is a 302-residue protein sequence, read N- to C-terminus: Deoxyribonuclease-1-like 1 (302 aa).

The first 18 residues, 1–18 (MHYPTALLFLILANGAQA), serve as a signal peptide directing secretion. Active-site residues include Glu-97 and His-148. Cys-187 and Cys-224 form a disulfide bridge. N-linked (GlcNAc...) asparagine glycosylation occurs at Asn-261.

Belongs to the DNase I family. In terms of tissue distribution, highest levels in skeletal and cardiac muscles. Detectable in all other tissues tested except brain.

It is found in the endoplasmic reticulum. The protein is Deoxyribonuclease-1-like 1 (DNASE1L1) of Homo sapiens (Human).